We begin with the raw amino-acid sequence, 37 residues long: Large ribosomal subunit protein bL36c (37 aa).

Belongs to the bacterial ribosomal protein bL36 family.

It localises to the plastid. The protein resides in the chloroplast. In Porphyra purpurea (Red seaweed), this protein is Large ribosomal subunit protein bL36c (rpl36).